The sequence spans 360 residues: Dihydroorotate dehydrogenase (quinone) (360 aa).

FMN-binding positions include 65–69 and Thr-89; that span reads AGLDK. Substrate is bound at residue Lys-69. Residue 114 to 118 participates in substrate binding; the sequence is NRLGF. Residues Asn-147 and Asn-180 each coordinate FMN. Asn-180 is a binding site for substrate. Ser-183 serves as the catalytic Nucleophile. A substrate-binding site is contributed by Asn-185. Residues Lys-225 and Thr-253 each coordinate FMN. 254 to 255 lines the substrate pocket; the sequence is NT. FMN is bound by residues Gly-276, Gly-305, and 326–327; that span reads YT.

The protein belongs to the dihydroorotate dehydrogenase family. Type 2 subfamily. As to quaternary structure, monomer. FMN is required as a cofactor.

It is found in the cell membrane. It catalyses the reaction (S)-dihydroorotate + a quinone = orotate + a quinol. The protein operates within pyrimidine metabolism; UMP biosynthesis via de novo pathway; orotate from (S)-dihydroorotate (quinone route): step 1/1. Catalyzes the conversion of dihydroorotate to orotate with quinone as electron acceptor. The polypeptide is Dihydroorotate dehydrogenase (quinone) (Verminephrobacter eiseniae (strain EF01-2)).